A 130-amino-acid chain; its full sequence is L-ectoine synthase (130 aa).

The protein belongs to the ectoine synthase family.

The catalysed reaction is (2S)-4-acetamido-2-aminobutanoate = L-ectoine + H2O. It functions in the pathway amine and polyamine biosynthesis; ectoine biosynthesis; L-ectoine from L-aspartate 4-semialdehyde: step 3/3. Functionally, catalyzes the circularization of gamma-N-acetyl-alpha,gamma-diaminobutyric acid (ADABA) to ectoine (1,4,5,6-tetrahydro-2-methyl-4-pyrimidine carboxylic acid), which is an excellent osmoprotectant. The chain is L-ectoine synthase from Mycolicibacterium gilvum (strain PYR-GCK) (Mycobacterium gilvum (strain PYR-GCK)).